The chain runs to 458 residues: BUD13 homolog (458 aa).

Disordered regions lie at residues 16-37 (SGDI…SGLR), 81-328 (KQTF…TEEL), and 437-458 (AKTE…AEYE). Over residues 138 to 148 (NRHDSDKDNSP) the composition is skewed to basic and acidic residues. 2 stretches are compositionally biased toward basic residues: residues 175–185 (RNRRSPPRTRR) and 208–218 (PRRRPSSPARR). 3 stretches are compositionally biased toward basic and acidic residues: residues 219-243 (RKDD…KKEE), 266-284 (RDLK…KMFE), and 314-328 (DQAK…TEEL). Residues 262–356 (LQSARDLKEE…AQLEEMARVA (95 aa)) are a coiled coil.

The protein belongs to the CWC26 family.

This Caenorhabditis elegans protein is BUD13 homolog.